A 122-amino-acid polypeptide reads, in one-letter code: UPF0102 protein R00337 (122 aa).

This sequence belongs to the UPF0102 family.

The protein is UPF0102 protein R00337 of Rhizobium meliloti (strain 1021) (Ensifer meliloti).